The primary structure comprises 421 residues: Tol-Pal system protein TolA (421 aa).

The Cytoplasmic portion of the chain corresponds to 1-13 (MSKATEQNDKLKR). The chain crosses the membrane as a helical span at residues 14 to 34 (AIIISAVLHVILFAALIWSSF). Topologically, residues 35-421 (DENIEASAGG…FKNAPLDFKP (387 aa)) are periplasmic. A domain II (alpha-helical) region spans residues 48 to 310 (SSIDAVMVDS…LSSGKNAPKT (263 aa)). Positions 65-266 (KRMQSQESSA…KAAADKKAAA (202 aa)) are disordered. 2 stretches are compositionally biased toward basic and acidic residues: residues 73-175 (SAKR…EAEA) and 206-266 (EARK…KAAA). 13 consecutive repeat copies span residues 224–229 (EKKAAA), 230–234 (EKAAA), 235–240 (DKKAAA), 241–245 (EKAAA), 246–250 (DKKAA), 251–255 (EKAAA), 256–260 (EKAAA), 261–266 (DKKAAA), 267–271 (EKAAA), 272–277 (DKKAAA), 278–282 (AKAAA), 283–287 (EKAAA), and 288–292 (AKAAA). Residues 224–292 (EKKAAAEKAA…EKAAAAKAAA (69 aa)) form a 13 X tandem repeats of [EDA]-K(1,2)-A(2,4) region. The interval 300–336 (ELSSGKNAPKTGGGAKGNNASPAGSGNTKNNGASGAD) is disordered. The tract at residues 311–421 (GGGAKGNNAS…FKNAPLDFKP (111 aa)) is domain III (functional). The span at 317-332 (NNASPAGSGNTKNNGA) shows a compositional bias: polar residues. Cysteines 363 and 388 form a disulfide.

It belongs to the TolA family. In terms of assembly, the Tol-Pal system is composed of five core proteins: the inner membrane proteins TolA, TolQ and TolR, the periplasmic protein TolB and the outer membrane protein Pal. They form a network linking the inner and outer membranes and the peptidoglycan layer. TolA interacts with TolQ and TolR via its N-terminal domain. Interacts with CpoB, and with the trimeric porins OmpC, OmpF, PhoE and LamB via its central domain. Interacts with TolB via its C-terminal domain. Also interacts with Pal via its C-terminal domain. This interaction is proton motive force dependent and requires TolQ and TolR.

The protein localises to the cell inner membrane. Part of the Tol-Pal system, which plays a role in outer membrane invagination during cell division and is important for maintaining outer membrane integrity. The Tol-Pal system is also required for polar localization of chemoreceptors clusters. The system also appears to be required for the activity of several outer membrane-localized enzymes with cell wall remodeling activity. Is involved in the uptake of group A colicins (colicins A, E1, E2, E3, and K) and in the uptake of filamentous phage DNA. The polypeptide is Tol-Pal system protein TolA (Escherichia coli (strain K12)).